Here is a 623-residue protein sequence, read N- to C-terminus: Translation initiation factor IF-2 (623 aa).

Over residues 1–18 (MTLNKKTNNENSSKTTPK) the composition is skewed to low complexity. 2 disordered regions span residues 1–21 (MTLN…KLSK) and 92–115 (PQKE…KLQA). Positions 125 to 293 (KTPPIVTIMG…ILLFSEIQNL (169 aa)) constitute a tr-type G domain. Residues 134–141 (GHVDHGKT) are G1. 134–141 (GHVDHGKT) contacts GTP. The interval 159 to 163 (GITQH) is G2. Residues 180–183 (DTPG) form a G3 region. Residues 180-184 (DTPGH) and 234-237 (NKVD) each bind GTP. Residues 234–237 (NKVD) are G4. Residues 270 to 272 (SAL) are G5.

It belongs to the TRAFAC class translation factor GTPase superfamily. Classic translation factor GTPase family. IF-2 subfamily.

The protein localises to the cytoplasm. Functionally, one of the essential components for the initiation of protein synthesis. Protects formylmethionyl-tRNA from spontaneous hydrolysis and promotes its binding to the 30S ribosomal subunits. Also involved in the hydrolysis of GTP during the formation of the 70S ribosomal complex. This is Translation initiation factor IF-2 from Aster yellows witches'-broom phytoplasma (strain AYWB).